We begin with the raw amino-acid sequence, 415 residues long: Diaminopimelate decarboxylase (415 aa).

Lys60 carries the post-translational modification N6-(pyridoxal phosphate)lysine. Pyridoxal 5'-phosphate-binding positions include Gly239 and 274 to 277 (EPGR). Residues Arg277, Arg313, and Tyr317 each coordinate substrate. Cys344 (proton donor) is an active-site residue. 2 residues coordinate substrate: Glu345 and Tyr372. Residue Tyr372 participates in pyridoxal 5'-phosphate binding.

The protein belongs to the Orn/Lys/Arg decarboxylase class-II family. LysA subfamily. In terms of assembly, homodimer. It depends on pyridoxal 5'-phosphate as a cofactor.

It carries out the reaction meso-2,6-diaminopimelate + H(+) = L-lysine + CO2. It participates in amino-acid biosynthesis; L-lysine biosynthesis via DAP pathway; L-lysine from DL-2,6-diaminopimelate: step 1/1. In terms of biological role, specifically catalyzes the decarboxylation of meso-diaminopimelate (meso-DAP) to L-lysine. The protein is Diaminopimelate decarboxylase of Haemophilus influenzae (strain ATCC 51907 / DSM 11121 / KW20 / Rd).